The following is a 465-amino-acid chain: Cysteine--tRNA ligase (465 aa).

A Zn(2+)-binding site is contributed by Cys27. Positions 29-39 match the 'HIGH' region motif; that stretch reads PTVYNFFHIGN. 3 residues coordinate Zn(2+): Cys207, His232, and Glu236. The short motif at 264 to 268 is the 'KMSKS' region element; the sequence is KMSKS. Lys267 lines the ATP pocket.

Belongs to the class-I aminoacyl-tRNA synthetase family. As to quaternary structure, monomer. Zn(2+) is required as a cofactor.

The protein resides in the cytoplasm. It carries out the reaction tRNA(Cys) + L-cysteine + ATP = L-cysteinyl-tRNA(Cys) + AMP + diphosphate. The protein is Cysteine--tRNA ligase of Clostridium botulinum (strain Langeland / NCTC 10281 / Type F).